The chain runs to 156 residues: Small ribosomal subunit protein uS7 (156 aa).

It belongs to the universal ribosomal protein uS7 family. In terms of assembly, part of the 30S ribosomal subunit. Contacts proteins S9 and S11.

Functionally, one of the primary rRNA binding proteins, it binds directly to 16S rRNA where it nucleates assembly of the head domain of the 30S subunit. Is located at the subunit interface close to the decoding center, probably blocks exit of the E-site tRNA. This Prochlorococcus marinus (strain MIT 9211) protein is Small ribosomal subunit protein uS7.